Here is a 440-residue protein sequence, read N- to C-terminus: Transposon Ty1-ML1 Gag polyprotein (440 aa).

Polar residues-rich tracts occupy residues 1–23 (MESQ…SVTS), 48–60 (TKAN…TPAS), and 127–152 (QSQF…GNTF). Disordered regions lie at residues 1–88 (MESQ…YPQQ), 126–173 (PQSQ…RPPP), and 352–440 (GSRN…PETY). Residues 153–165 (TDSSSADSDMTST) are compositionally biased toward low complexity. Residues 299-401 (NNGIHINNKV…NSKSKTARAH (103 aa)) are RNA-binding. A compositionally biased stretch (low complexity) spans 402 to 418 (NVSTSNNSPSTDNDSIS). A Phosphoserine modification is found at Ser-416. The segment covering 419-428 (KSTTEPIQLN) has biased composition (polar residues). Basic and acidic residues predominate over residues 429 to 440 (NKHDLHLRPETY).

As to quaternary structure, homotrimer.

It localises to the cytoplasm. In terms of biological role, capsid protein (CA) is the structural component of the virus-like particle (VLP), forming the shell that encapsulates the retrotransposons dimeric RNA genome. The particles are assembled from trimer-clustered units and there are holes in the capsid shells that allow for the diffusion of macromolecules. CA also has nucleocapsid-like chaperone activity, promoting primer tRNA(i)-Met annealing to the multipartite primer-binding site (PBS), dimerization of Ty1 RNA and initiation of reverse transcription. This Saccharomyces cerevisiae (strain ATCC 204508 / S288c) (Baker's yeast) protein is Transposon Ty1-ML1 Gag polyprotein (TY1A-ML1).